The following is a 192-amino-acid chain: Ion-translocating oxidoreductase complex subunit A (192 aa).

6 helical membrane passes run 5–25, 39–59, 65–85, 102–122, 134–154, and 171–191; these read LLLL…FLGL, IGMS…SYLV, LPFD…AVVV, ALGI…VALL, AIYG…FSAM, and AIAM…TGLV.

The protein belongs to the NqrDE/RnfAE family. The complex is composed of six subunits: RnfA, RnfB, RnfC, RnfD, RnfE and RnfG.

The protein localises to the cell inner membrane. Its function is as follows. Part of a membrane-bound complex that couples electron transfer with translocation of ions across the membrane. The protein is Ion-translocating oxidoreductase complex subunit A of Shewanella oneidensis (strain ATCC 700550 / JCM 31522 / CIP 106686 / LMG 19005 / NCIMB 14063 / MR-1).